The following is a 92-amino-acid chain: YcgL domain-containing protein VC_1957 (92 aa).

A YcgL domain is found at 1-84 (MLCSIYKSPK…PPENLLEQHK (84 aa)). Positions 69-92 (FLQLPPPPENLLEQHKERKARQTP) are disordered.

The polypeptide is YcgL domain-containing protein VC_1957 (Vibrio cholerae serotype O1 (strain ATCC 39315 / El Tor Inaba N16961)).